The sequence spans 162 residues: Onchocystatin (162 aa).

Residues 1–32 (MLTIKDGTLLIHLLLFSVVALVQLQGAKSARA) form the signal peptide. Residues 30-54 (ARAKNPSKMESKTGENQDRPVLLGG) are disordered. Over residues 36-47 (SKMESKTGENQD) the composition is skewed to basic and acidic residues. The Secondary area of contact motif lies at 97-101 (QVVAG). Cys115 and Cys128 are joined by a disulfide.

The protein belongs to the cystatin family. As to expression, expressed in the cuticle of L3 and L4 larvae, female adult, and in the eggshell of developing microfilariae.

Functionally, cysteine protease inhibitor which inhibits members of the peptidase C1 family. In the human host, inhibits CTSL/cathepsin L and CTSS/cathepsin S and to a lesser extent CTSB/cathepsin B which may cause defects in antigen processing and thereby impair antigen-driven T cell proliferation. This Onchocerca volvulus protein is Onchocystatin.